Reading from the N-terminus, the 294-residue chain is Foldase protein PrsA 1 (294 aa).

The signal sequence occupies residues 1–21; it reads MTKLKKVMISVIAATLLLLAG. The N-palmitoyl cysteine moiety is linked to residue cysteine 22. The S-diacylglycerol cysteine moiety is linked to residue cysteine 22. Residues 135 to 226 enclose the PpiC domain; that stretch reads EPDITVRHIL…YGYHLIQLVK (92 aa).

The protein belongs to the PrsA family.

The protein localises to the cell membrane. It carries out the reaction [protein]-peptidylproline (omega=180) = [protein]-peptidylproline (omega=0). In terms of biological role, plays a major role in protein secretion by helping the post-translocational extracellular folding of several secreted proteins. In Listeria monocytogenes serovar 1/2a (strain ATCC BAA-679 / EGD-e), this protein is Foldase protein PrsA 1 (prsA1).